We begin with the raw amino-acid sequence, 504 residues long: Procardosin-A (504 aa).

A signal peptide spans 1-24 (MGTSIKANVLALFLFYLLSPTVFS). The propeptide occupies 25-68 (VSDDGLIRIGLKKRKVDRIDQLRGRRALMEGNARKDFGFRGTVR). A Peptidase A1 domain is found at 85-501 (YFGEIGIGTP…DYGNLLVGFA (417 aa)). Aspartate 103 is a catalytic residue. Cysteine 116 and cysteine 122 are oxidised to a cystine. Asparagine 139 carries N-linked (GlcNAc...) asparagine glycosylation. The RGD motif signature appears at 246–248 (RGD). Cysteine 277 and cysteine 281 are joined by a disulfide. The active site involves aspartate 286. A propeptide spans 310–414 (GVMNQQCKTV…YANELCEHLS (105 aa)) (plant-specific insert). One can recognise a Saposin B-type domain in the interval 311-416 (VMNQQCKTVV…NELCEHLSTS (106 aa)). 4 disulfide bridges follow: cysteine 316/cysteine 410, cysteine 341/cysteine 382, cysteine 347/cysteine 379, and cysteine 424/cysteine 461. Residue asparagine 432 is glycosylated (N-linked (GlcNAc...) asparagine). The KGE motif signature appears at 455 to 457 (KGE).

It belongs to the peptidase A1 family. Heterodimer of a light chain and a heavy chain. An intermediate form (35 kDa and 30 kDa subunits) is produced first, and undergoes proteolytic processing to remove the internal plant-specific insert (PSI) and the propeptide. There is some heterogeniety at the cleavage site. Interacts (via RGD or KGE motifs) with PLD1 (via C2 domain). In terms of processing, N-glycosylated. Glycans found at Asn-139 include approximately 6% oligomannose, 82% oligosaccharides of the plant modified type with proximal fucose but without xylose and 6% oligosaccharides of the plant modified type with proximal fucose and xylose. Glycans found at Asn-432 include 14% oligosaccharides of the plant modified type with proximal fucose but without xylose and 86% oligosaccharides of the plant modified type with proximal fucose and xylose. Detected only in pistils, not in seeds, roots, midribs, bracts, stamens, pollen, vascular or supporting tissues. Detected in seeds. High amounts are detected in the broad outer region of the upper portion of the stigma, towards the lower portion of the stigma it accumulates at the periphery. Within the stigma, expressed mainly in the epidermic papillae, lower levels are found in the cortical parenchyma. Present mainly in epidermal cells within the stye (at protein level). Expressed in young flower buds, and at lower levels in seeds, pollen and bracteas, but not in roots or leaves.

The protein resides in the microsome membrane. The protein localises to the protein storage vacuole. It is found in the secreted. Its subcellular location is the cell wall. It localises to the extracellular space. The protein resides in the extracellular matrix. With respect to regulation, inhibited by the specific aspartic proteinase inhibitors diazoacetyl-noleucine methyl ester and pepstatin. Its function is as follows. Aspartic proteinase with a high preference for bonds between hydrophobic residues. Cleaves alpha-lactalbumin but not beta-lactoglobulin. This chain is Procardosin-A, found in Cynara cardunculus (Cardoon).